Consider the following 85-residue polypeptide: RNA-binding protein Hfq (85 aa).

The Sm domain maps to 9–68 (DPFLNALRRERIPVSIYLVNGIKLQGQVESFDQFVILLKNTVSQMVYKHAISTVVPARPV).

The protein belongs to the Hfq family. In terms of assembly, homohexamer.

Its function is as follows. RNA chaperone that binds small regulatory RNA (sRNAs) and mRNAs to facilitate mRNA translational regulation in response to envelope stress, environmental stress and changes in metabolite concentrations. Also binds with high specificity to tRNAs. This Tolumonas auensis (strain DSM 9187 / NBRC 110442 / TA 4) protein is RNA-binding protein Hfq.